The primary structure comprises 618 residues: Leucine aminopeptidase 2 (618 aa).

A peptide is bound by residues 139 to 141 (QCQ) and 271 to 276 (PYGGME). Histidine 300 provides a ligand contact to Zn(2+). Glutamate 301 (proton acceptor) is an active-site residue. Zn(2+) is bound by residues histidine 304 and glutamate 323. Tyrosine 389 serves as the catalytic Proton donor.

This sequence belongs to the peptidase M1 family. Zn(2+) serves as cofactor.

Its subcellular location is the cytoplasm. The protein localises to the nucleus. The catalysed reaction is an epoxide + H2O = an ethanediol. Functionally, aminopeptidase that preferentially cleaves di- and tripeptides. Also has low epoxide hydrolase activity (in vitro). Can hydrolyze the epoxide leukotriene LTA(4) but it forms preferentially 5,6-dihydroxy-7,9,11,14-eicosatetraenoic acid rather than the cytokine leukotriene B(4) as the product compared to the homologous mammalian enzyme (in vitro). This is Leucine aminopeptidase 2 from Aspergillus clavatus (strain ATCC 1007 / CBS 513.65 / DSM 816 / NCTC 3887 / NRRL 1 / QM 1276 / 107).